The primary structure comprises 228 residues: 2,3-bisphosphoglycerate-dependent phosphoglycerate mutase (228 aa).

Substrate contacts are provided by residues 8-15, 21-22, Arg-60, 87-90, Lys-98, 114-115, and 180-181; these read RHGQSQWN, TG, ERHY, RR, and GN. His-9 acts as the Tele-phosphohistidine intermediate in catalysis. Catalysis depends on Glu-87, which acts as the Proton donor/acceptor.

This sequence belongs to the phosphoglycerate mutase family. BPG-dependent PGAM subfamily. As to quaternary structure, homodimer.

It carries out the reaction (2R)-2-phosphoglycerate = (2R)-3-phosphoglycerate. It participates in carbohydrate degradation; glycolysis; pyruvate from D-glyceraldehyde 3-phosphate: step 3/5. In terms of biological role, catalyzes the interconversion of 2-phosphoglycerate and 3-phosphoglycerate. In Erythrobacter litoralis (strain HTCC2594), this protein is 2,3-bisphosphoglycerate-dependent phosphoglycerate mutase.